The sequence spans 344 residues: Succinylglutamate desuccinylase (344 aa).

Residues His63, Glu66, and His160 each coordinate Zn(2+). Glu224 is an active-site residue.

It belongs to the AspA/AstE family. Succinylglutamate desuccinylase subfamily. The cofactor is Zn(2+).

It carries out the reaction N-succinyl-L-glutamate + H2O = L-glutamate + succinate. The protein operates within amino-acid degradation; L-arginine degradation via AST pathway; L-glutamate and succinate from L-arginine: step 5/5. Functionally, transforms N(2)-succinylglutamate into succinate and glutamate. The protein is Succinylglutamate desuccinylase of Shewanella putrefaciens (strain CN-32 / ATCC BAA-453).